We begin with the raw amino-acid sequence, 59 residues long: Ribosome modulation factor (59 aa).

It belongs to the ribosome modulation factor family.

The protein localises to the cytoplasm. Functionally, during stationary phase, converts 70S ribosomes to an inactive dimeric form (100S ribosomes). This is Ribosome modulation factor from Aeromonas veronii (strain B565).